The following is a 247-amino-acid chain: MSAQMALSLSGVHKSFGTTSVLKNVEFSLTKGECIAIVGKSGCGKSTLLRLLARLEQPTAGEVYIPNGDIVRMMFQEGRLLPWKTVLQNVMLGLKHDRKRKALEAIKSVQLEGKENEWPRALSGGQKQRVALARTLVHSPHVLLLDEPLGALDALTRREMQQLIEKIWLQRGFSVVLVTHDIDEAVTLADRVYVIENGSIANTYDINLPRPRKRSSYEFVETAEEILNRVLGVNATNGHLVSLSNIK.

The ABC transporter domain occupies leucine 7–threonine 222. Glycine 39–serine 46 provides a ligand contact to ATP.

Belongs to the ABC transporter superfamily. Aliphatic sulfonates importer (TC 3.A.1.17.2) family. In terms of assembly, the complex is composed of two ATP-binding proteins (SsuB), two transmembrane proteins (SsuC) and a solute-binding protein (SsuA).

It localises to the cell membrane. The catalysed reaction is ATP + H2O + aliphatic sulfonate-[sulfonate-binding protein]Side 1 = ADP + phosphate + aliphatic sulfonateSide 2 + [sulfonate-binding protein]Side 1.. In terms of biological role, part of the ABC transporter complex SsuABC involved in aliphatic sulfonates import. Responsible for energy coupling to the transport system. The sequence is that of Aliphatic sulfonates import ATP-binding protein SsuB 1 from Shouchella clausii (strain KSM-K16) (Alkalihalobacillus clausii).